We begin with the raw amino-acid sequence, 181 residues long: Probable pyruvoyl-dependent arginine decarboxylase (181 aa).

Residue Ser-43 is modified to Pyruvic acid (Ser).

This sequence belongs to the PdaD family. Requires pyruvate as cofactor.

It catalyses the reaction L-arginine + H(+) = agmatine + CO2. This Chlorobium phaeobacteroides (strain BS1) protein is Probable pyruvoyl-dependent arginine decarboxylase.